A 460-amino-acid polypeptide reads, in one-letter code: ATP synthase subunit beta (460 aa).

150–157 (GGAGVGKT) provides a ligand contact to ATP.

Belongs to the ATPase alpha/beta chains family. F-type ATPases have 2 components, CF(1) - the catalytic core - and CF(0) - the membrane proton channel. CF(1) has five subunits: alpha(3), beta(3), gamma(1), delta(1), epsilon(1). CF(0) has three main subunits: a(1), b(2) and c(9-12). The alpha and beta chains form an alternating ring which encloses part of the gamma chain. CF(1) is attached to CF(0) by a central stalk formed by the gamma and epsilon chains, while a peripheral stalk is formed by the delta and b chains.

The protein localises to the cell inner membrane. It carries out the reaction ATP + H2O + 4 H(+)(in) = ADP + phosphate + 5 H(+)(out). Functionally, produces ATP from ADP in the presence of a proton gradient across the membrane. The catalytic sites are hosted primarily by the beta subunits. In Shigella dysenteriae serotype 1 (strain Sd197), this protein is ATP synthase subunit beta.